The following is a 28-amino-acid chain: Phospholipase A2 3 (28 aa).

It belongs to the phospholipase A2 family. Group I subfamily. Ca(2+) serves as cofactor. As to expression, expressed by the venom gland.

Its subcellular location is the secreted. The enzyme catalyses a 1,2-diacyl-sn-glycero-3-phosphocholine + H2O = a 1-acyl-sn-glycero-3-phosphocholine + a fatty acid + H(+). Snake venom phospholipase A2 (PLA2) that inhibits neuromuscular transmission by blocking acetylcholine release from the nerve termini. PLA2 catalyzes the calcium-dependent hydrolysis of the 2-acyl groups in 3-sn-phosphoglycerides. This Micrurus nigrocinctus (Central American coral snake) protein is Phospholipase A2 3.